The following is a 1011-amino-acid chain: Multiple C2 domain and transmembrane region protein 7 (1011 aa).

Residues Met-1–Phe-110 form the C2 1 domain. Positions Gln-178–Ala-195 are enriched in polar residues. Positions Gln-178–His-201 are disordered. C2 domains lie at Ile-261–Tyr-381, Val-421–Tyr-546, and Tyr-587–Tyr-709. Residues Asp-294, Asp-300, Asp-347, Asp-349, and Asp-354 each contribute to the Ca(2+) site. 3 consecutive transmembrane segments (helical) span residues Met-812–Trp-832, Leu-846–Ile-866, and Ile-954–Val-974.

Belongs to the MCTP family. Ca(2+) serves as cofactor. As to expression, accumulates specifically in hydathodes. Restricted the basal meristem of roots. Observed in flowers.

It is found in the membrane. The protein localises to the vesicle. The protein resides in the endosome membrane. Functionally, may function as a signaling molecule by regulating the trafficking of other regulators. This chain is Multiple C2 domain and transmembrane region protein 7, found in Arabidopsis thaliana (Mouse-ear cress).